A 350-amino-acid polypeptide reads, in one-letter code: NAD-dependent protein deacetylase sirtuin-2 (350 aa).

Residues 4 to 14 carry the Nuclear export signal motif; the sequence is LRNLFTQTLGL. Residue Ser-16 is modified to Phosphoserine. The Deacetylase sirtuin-type domain maps to 20-301; that stretch reads RLLDELTLEG…LALADLLGWK (282 aa). NAD(+)-binding positions include 48 to 52 and 58 to 60; these read AGIST and DFR. Ser-63 is subject to Phosphoserine. 130–133 is a binding site for NAD(+); the sequence is QNID. His-150 acts as the Proton acceptor in catalysis. Zn(2+) contacts are provided by Cys-158 and Cys-163. Residue Ser-170 is modified to Phosphoserine. The Zn(2+) site is built by Cys-184 and Cys-187. Residues 225–226, 249–251, and Cys-287 each bind NAD(+); these read TS and NKE. The disordered stretch occupies residues 312–350; that stretch reads ANIDAQSGSQASNPSATVSPRKSPPPAKEAARTKEKEEH. Positions 315-331 are enriched in polar residues; that stretch reads DAQSGSQASNPSATVSP. Phosphoserine is present on residues Ser-330 and Ser-334. A compositionally biased stretch (basic and acidic residues) spans 340-350; it reads EAARTKEKEEH.

It belongs to the sirtuin family. Class I subfamily. As to quaternary structure, interacts with CDC20, FOXO3 and FZR1. Associates with microtubules in primary cortical mature neurons. Homotrimer. Interacts (via both phosphorylated, unphosphorylated, active or inactive forms) with HDAC6; the interaction is necessary for the complex to interact with alpha-tubulin, suggesting that these proteins belong to a large complex that deacetylates the cytoskeleton. Interacts with FOXO1; the interaction is disrupted upon serum-starvation or oxidative stress, leading to increased level of acetylated FOXO1 and induction of autophagy. Interacts with RELA; the interaction occurs in the cytoplasm and is increased in a TNF-alpha-dependent manner. Interacts with HOXA10; the interaction is direct. Interacts with YWHAB and YWHAG; the interactions occur in a AKT-dependent manner and increase SIRT2-dependent TP53 deacetylation. Interacts with MAPK1/ERK2 and MAPK3/ERK1; the interactions increase SIRT2 stability and deacetylation activity. Interacts (phosphorylated form) with KMT5A isoform 2; the interaction is direct, stimulates KMT5A-mediated methyltransferase activity on histone at 'Lys-20' (H4K20me1) and is increased in a H(2)O(2)-induced oxidative stress-dependent manner. Interacts with G6PD; the interaction is enhanced by H(2)O(2) treatment. Interacts with a G1/S-specific cyclin E-CDK2 complex. Interacts with AURKA, CDK5R1 (p35 form) and CDK5 and HIF1A. Interacts with the tRNA ligase SARS1; recruited to the VEGFA promoter via interaction with SARS1. Interacts with BEX4; negatively regulates alpha-tubulin deacetylation by SIRT2. Requires Zn(2+) as cofactor. Post-translationally, phosphorylated at phosphoserine and phosphothreonine. Phosphorylated at Ser-330 by a mitotic kinase CDK1/cyclin B at the G2/M transition; phosphorylation regulates the delay in cell-cycle progression. Phosphorylated at Ser-330 by a mitotic kinase G1/S-specific cyclin E/Cdk2 complex; phosphorylation inactivates SIRT2-mediated alpha-tubulin deacetylation and thereby negatively regulates cell adhesion, cell migration and neurite outgrowth during neuronal differentiation. Phosphorylated by cyclin A/Cdk2 and p35-Cdk5 complexes and to a lesser extent by the cyclin D3/Cdk4 and cyclin B/Cdk1, in vitro. Dephosphorylated at Ser-330 by CDC14A and CDC14B around early anaphase. In terms of processing, acetylated by EP300; acetylation leads both to the decreased of SIRT2-mediated alpha-tubulin deacetylase activity and SIRT2-mediated down-regulation of TP53 transcriptional activity. Ubiquitinated. In terms of tissue distribution, expressed in the cerebellum, cerebral cortex and cervival spinal cord. Expressed in Purkinje cells, oligodendrocytes and Schwann cells (at protein level). Expressed in the central nervous system (CNS).

It is found in the nucleus. It localises to the cytoplasm. The protein resides in the perinuclear region. The protein localises to the cytoskeleton. Its subcellular location is the microtubule organizing center. It is found in the centrosome. It localises to the centriole. The protein resides in the spindle. The protein localises to the midbody. Its subcellular location is the chromosome. It is found in the perikaryon. It localises to the cell projection. The protein resides in the growth cone. The protein localises to the myelin membrane. It catalyses the reaction N(6)-acetyl-L-lysyl-[protein] + NAD(+) + H2O = 2''-O-acetyl-ADP-D-ribose + nicotinamide + L-lysyl-[protein]. It carries out the reaction N(6)-tetradecanoyl-L-lysyl-[protein] + NAD(+) + H2O = 2''-O-tetradecanoyl-ADP-D-ribose + nicotinamide + L-lysyl-[protein]. The catalysed reaction is N(6)-hexadecanoyl-L-lysyl-[protein] + NAD(+) + H2O = 2''-O-hexadecanoyl-ADP-D-ribose + nicotinamide + L-lysyl-[protein]. Its activity is regulated as follows. Inhibited by Sirtinol, A3 and M15 small molecules. Inhibited by nicotinamide. Inhibited by a macrocyclic peptide inhibitor S2iL5. Inhibited by EP300-induced acetylation. NAD-dependent protein deacetylase, which deacetylates internal lysines on histone and alpha-tubulin as well as many other proteins such as key transcription factors. Participates in the modulation of multiple and diverse biological processes such as cell cycle control, genomic integrity, microtubule dynamics, cell differentiation, metabolic networks, and autophagy. Plays a major role in the control of cell cycle progression and genomic stability. Functions in the antephase checkpoint preventing precocious mitotic entry in response to microtubule stress agents, and hence allowing proper inheritance of chromosomes. Positively regulates the anaphase promoting complex/cyclosome (APC/C) ubiquitin ligase complex activity by deacetylating CDC20 and FZR1, then allowing progression through mitosis. Associates both with chromatin at transcriptional start sites (TSSs) and enhancers of active genes. Plays a role in cell cycle and chromatin compaction through epigenetic modulation of the regulation of histone H4 'Lys-20' methylation (H4K20me1) during early mitosis. Specifically deacetylates histone H4 at 'Lys-16' (H4K16ac) between the G2/M transition and metaphase enabling H4K20me1 deposition by KMT5A leading to ulterior levels of H4K20me2 and H4K20me3 deposition throughout cell cycle, and mitotic S-phase progression. Deacetylates KMT5A modulating KMT5A chromatin localization during the mitotic stress response. Also deacetylates histone H3 at 'Lys-57' (H3K56ac) during the mitotic G2/M transition. During oocyte meiosis progression, may deacetylate histone H4 at 'Lys-16' (H4K16ac) and alpha-tubulin, regulating spindle assembly and chromosome alignment by influencing microtubule dynamics and kinetochore function. Deacetylates histone H4 at 'Lys-16' (H4K16ac) at the VEGFA promoter and thereby contributes to regulate expression of VEGFA, a key regulator of angiogenesis. Deacetylates alpha-tubulin at 'Lys-40' and hence controls neuronal motility, oligodendroglial cell arbor projection processes and proliferation of non-neuronal cells. Phosphorylation at Ser-368 by a G1/S-specific cyclin E-CDK2 complex inactivates SIRT2-mediated alpha-tubulin deacetylation, negatively regulating cell adhesion, cell migration and neurite outgrowth during neuronal differentiation. Deacetylates PARD3 and participates in the regulation of Schwann cell peripheral myelination formation during early postnatal development and during postinjury remyelination. Involved in several cellular metabolic pathways. Plays a role in the regulation of blood glucose homeostasis by deacetylating and stabilizing phosphoenolpyruvate carboxykinase PCK1 activity in response to low nutrient availability. Acts as a key regulator in the pentose phosphate pathway (PPP) by deacetylating and activating the glucose-6-phosphate G6PD enzyme, and therefore, stimulates the production of cytosolic NADPH to counteract oxidative damage. Maintains energy homeostasis in response to nutrient deprivation as well as energy expenditure by inhibiting adipogenesis and promoting lipolysis. Attenuates adipocyte differentiation by deacetylating and promoting FOXO1 interaction to PPARG and subsequent repression of PPARG-dependent transcriptional activity. Plays a role in the regulation of lysosome-mediated degradation of protein aggregates by autophagy in neuronal cells. Deacetylates FOXO1 in response to oxidative stress or serum deprivation, thereby negatively regulating FOXO1-mediated autophagy. Deacetylates a broad range of transcription factors and co-regulators regulating target gene expression. Deacetylates transcriptional factor FOXO3 stimulating the ubiquitin ligase SCF(SKP2)-mediated FOXO3 ubiquitination and degradation. Deacetylates HIF1A and therefore promotes HIF1A degradation and inhibition of HIF1A transcriptional activity in tumor cells in response to hypoxia. Deacetylates RELA in the cytoplasm inhibiting NF-kappaB-dependent transcription activation upon TNF-alpha stimulation. Inhibits transcriptional activation by deacetylating p53/TP53 and EP300. Also deacetylates EIF5A. Functions as a negative regulator on oxidative stress-tolerance in response to anoxia-reoxygenation conditions. Plays a role as tumor suppressor. In addition to protein deacetylase activity, also has activity toward long-chain fatty acyl groups and mediates protein-lysine demyristoylation and depalmitoylation of target proteins, such as ARF6 and KRAS, thereby regulating their association with membranes. This chain is NAD-dependent protein deacetylase sirtuin-2 (Sirt2), found in Rattus norvegicus (Rat).